Here is an 87-residue protein sequence, read N- to C-terminus: Small ribosomal subunit protein bS20 (87 aa).

Belongs to the bacterial ribosomal protein bS20 family.

Functionally, binds directly to 16S ribosomal RNA. This is Small ribosomal subunit protein bS20 from Brachyspira hyodysenteriae (strain ATCC 49526 / WA1).